Reading from the N-terminus, the 335-residue chain is Avermitilol synthase (335 aa).

Residues Asp-80, Asp-84, Asn-219, Ser-223, and Glu-227 each coordinate Mg(2+). Residues 80 to 84 carry the DDXXD motif motif; the sequence is DDQFD.

Belongs to the terpene synthase family. Mg(2+) serves as cofactor.

It catalyses the reaction (2E,6E)-farnesyl diphosphate + H2O = avermitilol + diphosphate. Functionally, catalyzes the cyclization of farnesyl diphosphate to avermitilol. The sequence is that of Avermitilol synthase (tpc1) from Streptomyces avermitilis (strain ATCC 31267 / DSM 46492 / JCM 5070 / NBRC 14893 / NCIMB 12804 / NRRL 8165 / MA-4680).